Here is an 87-residue protein sequence, read N- to C-terminus: Small ribosomal subunit protein bS16 (87 aa).

The protein belongs to the bacterial ribosomal protein bS16 family.

This is Small ribosomal subunit protein bS16 from Buchnera aphidicola subsp. Baizongia pistaciae (strain Bp).